The following is a 343-amino-acid chain: MIELSNITKVFQQNGRSITALADVSLHVPTGQIYGVIGASGAGKSTLIRCVNLLERPTEGKVLVDGQELTQLSDSQLTRARRQIGMIFQHFNLLSSRTVFGNISLPLELDNTPKADITKRVNELLELVGLADKHDVYPANLSGGQKQRVAIARALASNPKVLLCDEATSALDPATTRSILELLKDINRRLGLTILLITHEMDVVKRICDQVAVISDGRLIEKDTVSEVFSHPKTPLAQKFIQSTLHLDIPDDYLTRLSPDYHPDTTPLLRMEFTGKSVDAPLLSEVARRFNVNNNIISAQMDYAGGVKFGIMLAEMHGNNADIKDAIQFLQESHVTIEVLGYV.

The 240-residue stretch at 2 to 241 (IELSNITKVF…PKTPLAQKFI (240 aa)) folds into the ABC transporter domain. An ATP-binding site is contributed by 38-45 (GASGAGKS).

The protein belongs to the ABC transporter superfamily. Methionine importer (TC 3.A.1.24) family. In terms of assembly, the complex is composed of two ATP-binding proteins (MetN), two transmembrane proteins (MetI) and a solute-binding protein (MetQ).

The protein localises to the cell inner membrane. The enzyme catalyses L-methionine(out) + ATP + H2O = L-methionine(in) + ADP + phosphate + H(+). The catalysed reaction is D-methionine(out) + ATP + H2O = D-methionine(in) + ADP + phosphate + H(+). Part of the ABC transporter complex MetNIQ involved in methionine import. Responsible for energy coupling to the transport system. This is Methionine import ATP-binding protein MetN 3 from Pectobacterium atrosepticum (strain SCRI 1043 / ATCC BAA-672) (Erwinia carotovora subsp. atroseptica).